Reading from the N-terminus, the 116-residue chain is Transcriptional regulator WhiB4 (116 aa).

One can recognise a 4Fe-4S Wbl-type domain in the interval leucine 36–alanine 92. [4Fe-4S] cluster-binding residues include cysteine 37, cysteine 59, cysteine 62, and cysteine 68.

It belongs to the WhiB family. [4Fe-4S] cluster is required as a cofactor. The Fe-S cluster can be nitrosylated by nitric oxide (NO). In terms of processing, upon Fe-S cluster removal intramolecular disulfide bonds are formed.

It localises to the cytoplasm. Functionally, acts as a transcriptional regulator. Probably redox-responsive. The apo- but not holo-form probably binds DNA. Plays a role in lipooligosaccharide (LOS) biosynthesis by regulating LOS gene expression. This chain is Transcriptional regulator WhiB4 (whiB4), found in Mycobacterium marinum (strain ATCC BAA-535 / M).